The chain runs to 792 residues: Ubiquitin carboxyl-terminal hydrolase 10 (792 aa).

The tract at residues 2-27 is DHR2-binding module; the sequence is TTQESIKPLVDRILSNPLQFNAAMIS. Disordered stretches follow at residues 64-87 and 103-320; these read AESK…NTVP and KDAA…SITP. Residues 107–129 show a composition bias toward low complexity; that stretch reads DATGAKKSAELSTELSTEPPSSS. The tract at residues 109-145 is SIR4-binding module; that stretch reads TGAKKSAELSTELSTEPPSSSSEDDKVGKEEEEEGEI. Positions 144–171 are enriched in basic and acidic residues; it reads EIFHEARDYVEPRKASLKERDNADKGDG. The interval 167–208 is UTP22-binding module; it reads DKGDGEDIGEDIGEDIGEDIGEDIGEDIGENLGSPLATIDDS. Acidic residues predominate over residues 172–195; the sequence is EDIGEDIGEDIGEDIGEDIGEDIG. Residues 211-220 are compositionally biased toward basic and acidic residues; sequence ENEKEKRKEL. Positions 226-241 are enriched in acidic residues; that stretch reads SDDEIEDDEDEDDMDY. A compositionally biased stretch (polar residues) spans 288 to 297; that stretch reads VNNTKENGNR. Positions 362–733 constitute a USP domain; sequence RGLLNHGVTC…NAYYLLYTRL (372 aa). Cysteine 371 (nucleophile) is an active-site residue. The segment at 526–563 is disordered; it reads LDPNSDLSSDSINGTSATTSTTTSNAATKPSLSSSSSV. The segment covering 530-539 has biased composition (polar residues); it reads SDLSSDSING. Low complexity predominate over residues 540–563; the sequence is TSATTSTTTSNAATKPSLSSSSSV. The active-site Proton acceptor is histidine 691. The segment covering 749–766 has biased composition (polar residues); it reads TGNVTSKSKQEQAVNEPN. Residues 749-792 are disordered; sequence TGNVTSKSKQEQAVNEPNNRPLKINSKKNNRKKWKKNKKRKFTK. A compositionally biased stretch (basic residues) spans 773–792; the sequence is NSKKNNRKKWKKNKKRKFTK.

Belongs to the peptidase C19 family. As to quaternary structure, interacts with SIR4. Interacts with the proliferating-cell nuclear antigen PCNA/POL30. Interacts with DHR2 and UTP22.

The protein localises to the nucleus. It localises to the chromosome. Its subcellular location is the telomere. It is found in the nucleolus. The catalysed reaction is Thiol-dependent hydrolysis of ester, thioester, amide, peptide and isopeptide bonds formed by the C-terminal Gly of ubiquitin (a 76-residue protein attached to proteins as an intracellular targeting signal).. Its function is as follows. Deubiquitinating enzyme involved in telomere and HM loci silencing, which is the repression of chromatin structure which leads to a stop in the transcription of nearby genes. Targets histone H2B for deubiquitination, thus helping to localize SIR2 to the telomere. At silent chromatin, including telomeres and the rDNA locus, not only maintains low H2B 'Lys-123' ubiquitination (H2BK123Ub), but also low H3 'Lys-4' and 'Lys-79' methylation (H3K4me and H3K79me, respectively). Controls the proliferating-cell nuclear antigen PCNA/POL30 deubiquitination which is crucial for keeping TLS polymerases in check as well as for down-regulating the error-free bypass. Deubiquitinates and stabilizes RPA190, the largest subunit of RNA polymerase I, to achieve optimal levels of ribosomes and cell growth. Also protects nutrient transporters such as GAP1 from ubiquitin-dependent endocytosis. The polypeptide is Ubiquitin carboxyl-terminal hydrolase 10 (UBP10) (Saccharomyces cerevisiae (strain ATCC 204508 / S288c) (Baker's yeast)).